Here is a 283-residue protein sequence, read N- to C-terminus: Aspartate dehydrogenase domain-containing protein (283 aa).

2 positions are modified to phosphoserine: S20 and S168.

The protein belongs to the L-aspartate dehydrogenase family.

The protein is Aspartate dehydrogenase domain-containing protein of Homo sapiens (Human).